The primary structure comprises 249 residues: MSRGYGLIFSLKVVFTFLSLPHPPGLQGSLDRLQLEYVDIVFANRSDPNSPMEEIVRAMTYVINQGLALYWGTSRWSAAEIMEAYSMARQFNLIPPVCEQAENHFFQREKVEMQLPELYHKIGVGSVTWSPLACGLITSKYDGRVPDTCKATVKGYQWLKEKVQSEEGKKQQARVMDLLPTARQLGCTVGQLAIAWCLRSEGVSSVLLGVSSAEQLMEHLGSLQVLSQLTPQTVVEIDALLGNKSHSKK.

Residues asparagine 44, serine 74, arginine 75, glutamine 100, tryptophan 129, serine 130, proline 131, leucine 132, alanine 133, cysteine 134, lysine 140, lysine 150, glycine 209, serine 211, glutamine 215, and glutamate 218 each contribute to the NADP(+) site.

Belongs to the shaker potassium channel beta subunit family. Forms heteromultimeric complex with alpha subunits. Interacts with KCNA5 and KCNB2. As to expression, strong expression in brain, with highest levels in neocortical and allocortical regions, hippocampus, olfactory bulb and cerebellum. Also strong in kidney. Weak expression in lung, skeletal muscle and heart.

The protein resides in the cytoplasm. Regulatory subunit of the voltage-gated potassium (Kv) channels composed of pore-forming and potassium-conducting alpha subunits and of regulatory beta subunit. The beta-3/KCNAB3 subunit may mediate closure of potassium channels. Enhances the expression of Kv2.2/KCNB2 alpha subunit-containing Kv channels but not Kv2.1/KCNB1. May display nicotinamide adenine dinucleotide phosphate (NADPH)-dependent aldoketoreductase activity. The binding of oxidized and reduced NADP(H) cofactors may be required for the regulation of potassium channel activity. The sequence is that of Voltage-gated potassium channel subunit beta-3 from Mus musculus (Mouse).